A 242-amino-acid polypeptide reads, in one-letter code: Small ribosomal subunit protein eS1 (242 aa).

The protein belongs to the eukaryotic ribosomal protein eS1 family. As to quaternary structure, component of the small ribosomal subunit. Mature ribosomes consist of a small (40S) and a large (60S) subunit. The 40S subunit contains about 33 different proteins and 1 molecule of RNA (18S). The 60S subunit contains about 49 different proteins and 3 molecules of RNA (25S, 5.8S and 5S).

It is found in the cytoplasm. The polypeptide is Small ribosomal subunit protein eS1 (Lodderomyces elongisporus (strain ATCC 11503 / CBS 2605 / JCM 1781 / NBRC 1676 / NRRL YB-4239) (Yeast)).